The chain runs to 112 residues: Large ribosomal subunit protein mL53 (112 aa).

The protein belongs to the mitochondrion-specific ribosomal protein mL53 family. In terms of assembly, component of the mitochondrial large ribosomal subunit (mt-LSU). Mature mammalian 55S mitochondrial ribosomes consist of a small (28S) and a large (39S) subunit. The 28S small subunit contains a 12S ribosomal RNA (12S mt-rRNA) and 30 different proteins. The 39S large subunit contains a 16S rRNA (16S mt-rRNA), a copy of mitochondrial valine transfer RNA (mt-tRNA(Val)), which plays an integral structural role, and 52 different proteins. mL53 is located at the L7/L12 stalk.

The protein resides in the mitochondrion. The chain is Large ribosomal subunit protein mL53 (MRPL53) from Homo sapiens (Human).